Reading from the N-terminus, the 520-residue chain is Keratin, type II cytoskeletal 72 (520 aa).

The head stretch occupies residues 1-133 (MSRQLTLYPG…DPEIQKVRAQ (133 aa)). Positions 134–169 (EREQIKALNNKFASFIDKVRFLEQQNQVLETKWELL) are coil 1A. Positions 134–447 (EREQIKALNN…KLLESEESRM (314 aa)) constitute an IF rod domain. The interval 170–188 (QQLDLNNSKRSLEPVHESY) is linker 1. The tract at residues 189–280 (ISNLQKQLEI…VLFEGEIAQM (92 aa)) is coil 1B. The tract at residues 281–304 (QSHISDTSVILSMDNNRQLDLDSI) is linker 12. The coil 2 stretch occupies residues 305–443 (LAEVRAQYEE…ATYRKLLESE (139 aa)). The segment at 444 to 520 (ESRMAGEYPN…SSGTTKKTSR (77 aa)) is tail. Positions 494-520 (KGSCGSELKDPPAKTSGSSGTTKKTSR) are disordered. Residues 507–520 (KTSGSSGTTKKTSR) are compositionally biased toward low complexity.

This sequence belongs to the intermediate filament family. Heterotetramer of two type I and two type II keratins.

Functionally, has a role in hair formation. Specific component of keratin intermediate filaments in the inner root sheath (IRS) of the hair follicle. The chain is Keratin, type II cytoskeletal 72 (Krt72) from Mus musculus (Mouse).